A 413-amino-acid chain; its full sequence is SET and MYND domain-containing protein DDB_G0273591 (413 aa).

Residues 6-311 (DGLKLSNSEL…KGDQINISYL (306 aa)) form the SET domain. The MYND-type zinc-finger motif lies at 51-95 (CYNCIKLIKSPSPQQVPRCFGCNEVWYCSEKCKQDNQAKHQHYEC). The disordered stretch occupies residues 205 to 232 (DNNNNNNNNNNNNNNNNNNNNNNNNNNN). A coiled-coil region spans residues 216–243 (NNNNNNNNNNNNNNNNNNNIEELIKLIR).

Belongs to the class V-like SAM-binding methyltransferase superfamily.

Functionally, probable methyltransferase. The chain is SET and MYND domain-containing protein DDB_G0273591 from Dictyostelium discoideum (Social amoeba).